Consider the following 225-residue polypeptide: DnaA regulatory inactivator Hda (225 aa).

The protein belongs to the DnaA family. HdA subfamily. The active form seems to be an ADP-bound monomer. Forms the RIDA complex (regulatory inactivation of DnaA) of ATP-DnaA, ADP-Hda and the DNA-loaded beta sliding clamp (dnaN).

Mediates the interaction of DNA replication initiator protein DnaA with DNA polymerase subunit beta sliding clamp (dnaN). Stimulates hydrolysis of ATP-DnaA to ADP-DnaA, rendering DnaA inactive for reinitiation, a process called regulatory inhibition of DnaA or RIDA. The protein is DnaA regulatory inactivator Hda of Klebsiella pneumoniae (strain 342).